A 256-amino-acid polypeptide reads, in one-letter code: Probable hydroxyacylglutathione hydrolase SPCC13B11.03c (256 aa).

The Zn(2+) site is built by His63, His65, Asp67, His68, His118, and Asp139. Residues 148–150, 178–180, and 250–253 each bind substrate; these read RFF, HEY, and RTLK. His178 is a Zn(2+) binding site.

It belongs to the metallo-beta-lactamase superfamily. Glyoxalase II family. It depends on Zn(2+) as a cofactor.

It is found in the cytoplasm. The protein resides in the nucleus. It carries out the reaction an S-(2-hydroxyacyl)glutathione + H2O = a 2-hydroxy carboxylate + glutathione + H(+). The enzyme catalyses (R)-S-lactoylglutathione + H2O = (R)-lactate + glutathione + H(+). It functions in the pathway secondary metabolite metabolism; methylglyoxal degradation; (R)-lactate from methylglyoxal: step 2/2. Thiolesterase that catalyzes the hydrolysis of S-D-lactoylglutathione to form glutathione and D-lactic acid. Involved in the metabolism of methylglyoxal, a toxic compound for yeast proliferation, by converting methylglyoxal to lactate via S-D-lactoylglutathione by sequential enzyme reactions catalyzed by glyoxalase I and glyoxalase II. This is Probable hydroxyacylglutathione hydrolase SPCC13B11.03c from Schizosaccharomyces pombe (strain 972 / ATCC 24843) (Fission yeast).